The sequence spans 138 residues: Large-conductance mechanosensitive channel (138 aa).

The next 3 membrane-spanning stretches (helical) occupy residues 19 to 39 (VGVIIGAAFGAIVSSLVGDVI), 40 to 60 (MPVIGAITGGLDFSNYFIGLS), and 81 to 101 (GSFLTVTLNFLIIAFVLFIVI).

Belongs to the MscL family. In terms of assembly, homopentamer.

The protein localises to the cell inner membrane. Functionally, channel that opens in response to stretch forces in the membrane lipid bilayer. May participate in the regulation of osmotic pressure changes within the cell. The protein is Large-conductance mechanosensitive channel of Afipia carboxidovorans (strain ATCC 49405 / DSM 1227 / KCTC 32145 / OM5) (Oligotropha carboxidovorans).